We begin with the raw amino-acid sequence, 131 residues long: Profilin-2 (131 aa).

The protein belongs to the profilin family. Occurs in many kinds of cells as a complex with monomeric actin in a 1:1 ratio. As to expression, expressed in the intestinal wall, the spermatheca, and the pharynx.

Its subcellular location is the cytoplasm. It localises to the cytoskeleton. In terms of biological role, binds to actin and affects the structure of the cytoskeleton. At high concentrations, profilin prevents the polymerization of actin, whereas it enhances it at low concentrations. By binding to PIP2, it inhibits the formation of IP3 and DG. The polypeptide is Profilin-2 (pfn-2) (Caenorhabditis elegans).